The chain runs to 89 residues: UPF0367 protein PCC8801_1959 (89 aa).

This sequence belongs to the UPF0367 family.

This Rippkaea orientalis (strain PCC 8801 / RF-1) (Cyanothece sp. (strain PCC 8801)) protein is UPF0367 protein PCC8801_1959.